Here is a 363-residue protein sequence, read N- to C-terminus: Neutral protease 2 homolog NFIA_102630 (363 aa).

The first 19 residues, 1–19 (MKVTVLASAILALINGALA), serve as a signal peptide directing secretion. Positions 20 to 172 (LPANAPTLDV…PQAIKLLDRR (153 aa)) are excised as a propeptide. Intrachain disulfides connect Cys178–Cys250 and Cys257–Cys275. His300 contacts Zn(2+). Glu301 is a catalytic residue. 2 residues coordinate Zn(2+): His304 and Asp315.

This sequence belongs to the peptidase M35 family. Zn(2+) is required as a cofactor.

The protein localises to the secreted. The catalysed reaction is Preferential cleavage of bonds with hydrophobic residues in P1'. Also 3-Asn-|-Gln-4 and 8-Gly-|-Ser-9 bonds in insulin B chain.. Its function is as follows. Secreted metalloproteinase that allows assimilation of proteinaceous substrates. Shows high activities on basic nuclear substrates such as histone and protamine. The chain is Neutral protease 2 homolog NFIA_102630 from Neosartorya fischeri (strain ATCC 1020 / DSM 3700 / CBS 544.65 / FGSC A1164 / JCM 1740 / NRRL 181 / WB 181) (Aspergillus fischerianus).